The sequence spans 139 residues: Large ribosomal subunit protein bL17 (139 aa).

The segment at 117-139 (DRDPEAKGQDSGPVEIKDESEEG) is disordered.

The protein belongs to the bacterial ribosomal protein bL17 family. In terms of assembly, part of the 50S ribosomal subunit. Contacts protein L32.

This chain is Large ribosomal subunit protein bL17, found in Rhodospirillum centenum (strain ATCC 51521 / SW).